Here is a 1846-residue protein sequence, read N- to C-terminus: Unconventional myosin-Vb (1846 aa).

The Myosin N-terminal SH3-like domain maps to Ser8–Pro60. Residues Val21–Leu40 are requires for interaction with LIMA1. The Myosin motor domain maps to Val69–Ala763. Gly163–Thr170 is an ATP binding site. A disordered region spans residues Val599 to His629. Residues Ser607–Arg619 show a composition bias toward low complexity. Residues Leu641 to Asp663 form an actin-binding region. 6 consecutive IQ domains span residues Arg767–Arg788, Leu789–Arg813, Arg814–Val837, Arg838–Leu861, Thr862–Arg884, and Gln885–Ser914. 2 coiled-coil regions span residues Ala915–Arg1272 and Leu1334–Glu1450. The tract at residues Arg1088–Asp1122 is disordered. Residues Pro1100–Ile1120 are compositionally biased toward polar residues. Ser1444 is subject to Phosphoserine. The Dilute domain occupies Ser1524 to Glu1801.

This sequence belongs to the TRAFAC class myosin-kinesin ATPase superfamily. Myosin family. In terms of assembly, component of the CART complex, at least composed of ACTN4, HGS/HRS, MYO5B and TRIM3. Interacts with RAB11FIP2. Interacts with RAB11A and RAB8A. Found in a complex with CFTR and RAB11A. Interacts with NPC1L1. Interacts with LIMA1.

The protein resides in the cytoplasm. Its function is as follows. May be involved in vesicular trafficking via its association with the CART complex. The CART complex is necessary for efficient transferrin receptor recycling but not for EGFR degradation. Required in a complex with RAB11A and RAB11FIP2 for the transport of NPC1L1 to the plasma membrane. Together with RAB11A participates in CFTR trafficking to the plasma membrane and TF (transferrin) recycling in nonpolarized cells. Together with RAB11A and RAB8A participates in epithelial cell polarization. Together with RAB25 regulates transcytosis. Required for proper localization of bile salt export pump ABCB11 at the apical/canalicular plasma membrane of hepatocytes. The sequence is that of Unconventional myosin-Vb (Myo5b) from Rattus norvegicus (Rat).